Reading from the N-terminus, the 655-residue chain is Sphingomyelin phosphodiesterase 3 (655 aa).

The Cytoplasmic portion of the chain corresponds to 1 to 10 (MVLYTTPFPN). Positions 11 to 31 (SCLSALHAVSWALIFPCYWLV) form an intramembrane region, helical. Topologically, residues 32–64 (DRLLASFIPTTYEKRQRADDPCCLQLFCTVLFT) are cytoplasmic. 3 S-palmitoyl cysteine lipidation sites follow: Cys-53, Cys-54, and Cys-59. Residues 65–85 (PVYLALLVAALPFAFLGFIFW) constitute an intramembrane region (helical). Over 86-655 (SPLQSARRPY…LMVSAGEEEA (570 aa)) the chain is Cytoplasmic. Residue Ser-178 is modified to Phosphoserine. Residues 209–318 (VEYKGDGGRH…SGGSGEPGAN (110 aa)) form a disordered region. 2 stretches are compositionally biased toward basic and acidic residues: residues 211 to 221 (YKGDGGRHPSD) and 246 to 255 (GGEEGGRPQE). At Ser-289 the chain carries Phosphoserine. Glu-362 contributes to the Mg(2+) binding site. 2 S-palmitoyl cysteine lipidation sites follow: Cys-395 and Cys-396. The active-site Proton acceptor is the His-639.

Belongs to the neutral sphingomyelinase family. Mg(2+) is required as a cofactor. Post-translationally, palmitoylated, palmitoylation-deficient proteins are targeted for lysosomal degradation. As to expression, predominantly expressed in brain (at protein level).

It localises to the golgi apparatus membrane. The protein localises to the cell membrane. The enzyme catalyses a sphingomyelin + H2O = phosphocholine + an N-acylsphing-4-enine + H(+). It catalyses the reaction N-(15Z-tetracosenoyl)sphing-4-enine-1-phosphocholine + H2O = N-(15Z-tetracosenoyl)-sphing-4-enine + phosphocholine + H(+). The catalysed reaction is N-(tetracosanoyl)-sphing-4-enine-1-phosphocholine + H2O = N-tetracosanoyl-sphing-4-enine + phosphocholine + H(+). It carries out the reaction N-(hexadecanoyl)-sphing-4-enine-1-phosphocholine + H2O = N-hexadecanoylsphing-4-enine + phosphocholine + H(+). The enzyme catalyses an N-(acyl)-sphingosylphosphocholine + H2O = an N-acyl-sphingoid base + phosphocholine + H(+). It catalyses the reaction 1-hexadecanoyl-sn-glycero-3-phosphocholine + H2O = 1-hexadecanoyl-sn-glycerol + phosphocholine + H(+). The catalysed reaction is 1-O-octadecyl-sn-glycero-3-phosphocholine + H2O = 1-O-octadecyl-sn-glycerol + phosphocholine + H(+). It carries out the reaction a sphingosylphosphocholine + H2O = a sphingoid base + phosphocholine + H(+). It participates in lipid metabolism; sphingolipid metabolism. With respect to regulation, inhibited by nSMase inhibitor GW4869. Binding of anionic phospholipids (APLs) such as phosphatidylserine (PS) and phosphatidic acid (PA) increases enzymatic activity. Functionally, catalyzes the hydrolysis of sphingomyelin to form ceramide and phosphocholine. Ceramide mediates numerous cellular functions, such as apoptosis and growth arrest, and is capable of regulating these 2 cellular events independently. Also hydrolyzes sphingosylphosphocholine. Regulates the cell cycle by acting as a growth suppressor in confluent cells. Probably acts as a regulator of postnatal development and participates in bone and dentin mineralization. Binds to anionic phospholipids (APLs) such as phosphatidylserine (PS) and phosphatidic acid (PA) that modulate enzymatic activity and subcellular location. May be involved in IL-1-beta-induced JNK activation in hepatocytes. May act as a mediator in transcriptional regulation of NOS2/iNOS via the NF-kappa-B activation under inflammatory conditions. This chain is Sphingomyelin phosphodiesterase 3, found in Mus musculus (Mouse).